The sequence spans 253 residues: Chitooligosaccharide deacetylase (253 aa).

Residues His61 and His126 each contribute to the Mg(2+) site.

This sequence belongs to the YdjC deacetylase family. ChbG subfamily. Homodimer. The cofactor is Mg(2+).

It is found in the cytoplasm. It carries out the reaction N,N'-diacetylchitobiose + H2O = N-acetyl-beta-D-glucosaminyl-(1-&gt;4)-D-glucosamine + acetate. The enzyme catalyses diacetylchitobiose-6'-phosphate + H2O = N'-monoacetylchitobiose-6'-phosphate + acetate. It functions in the pathway glycan degradation; chitin degradation. In terms of biological role, involved in the degradation of chitin. ChbG is essential for growth on the acetylated chitooligosaccharides chitobiose and chitotriose but is dispensable for growth on cellobiose and chitosan dimer, the deacetylated form of chitobiose. Deacetylation of chitobiose-6-P and chitotriose-6-P is necessary for both the activation of the chb promoter by the regulatory protein ChbR and the hydrolysis of phosphorylated beta-glucosides by the phospho-beta-glucosidase ChbF. Catalyzes the removal of only one acetyl group from chitobiose-6-P to yield monoacetylchitobiose-6-P, the inducer of ChbR and the substrate of ChbF. In Yersinia pestis bv. Antiqua (strain Angola), this protein is Chitooligosaccharide deacetylase.